Reading from the N-terminus, the 198-residue chain is Guanylate kinase (198 aa).

Gly2 carries the post-translational modification N-acetylglycine. Positions 4–186 (PRPVVLSGPS…AYWALKEALS (183 aa)) constitute a Guanylate kinase-like domain. 14–19 (GAGKST) lines the ATP pocket. 37-51 (SHTTRDPRPGEENGK) provides a ligand contact to substrate. Catalysis depends on residues Arg44, Arg137, and Arg148. Residue 171 to 172 (ND) coordinates ATP.

It belongs to the guanylate kinase family. As to quaternary structure, monomer. Interacts with RD3.

Its subcellular location is the photoreceptor inner segment. The protein localises to the cytoplasm. It is found in the cytosol. The catalysed reaction is GMP + ATP = GDP + ADP. Up-regulated by RD3. In terms of biological role, catalyzes the phosphorylation of GMP to GDP. Essential enzyme for recycling GMP and indirectly, cyclic GMP (cGMP). Involved in the cGMP metabolism in photoreceptors. The protein is Guanylate kinase (GUK1) of Sus scrofa (Pig).